Consider the following 691-residue polypeptide: Elongation factor G (691 aa).

One can recognise a tr-type G domain in the interval 8–282; the sequence is ERVRNIGIAA…AVVNYLPAPV (275 aa). Residues 17–24, 81–85, and 135–138 each bind GTP; these read AHIDAGKT, DTPGH, and NKMD.

This sequence belongs to the TRAFAC class translation factor GTPase superfamily. Classic translation factor GTPase family. EF-G/EF-2 subfamily.

Its subcellular location is the cytoplasm. In terms of biological role, catalyzes the GTP-dependent ribosomal translocation step during translation elongation. During this step, the ribosome changes from the pre-translocational (PRE) to the post-translocational (POST) state as the newly formed A-site-bound peptidyl-tRNA and P-site-bound deacylated tRNA move to the P and E sites, respectively. Catalyzes the coordinated movement of the two tRNA molecules, the mRNA and conformational changes in the ribosome. The polypeptide is Elongation factor G (Prochlorococcus marinus (strain NATL1A)).